Consider the following 566-residue polypeptide: Arginine--tRNA ligase (566 aa).

Positions 121 to 131 match the 'HIGH' region motif; sequence PNIAKPMSMGH.

Belongs to the class-I aminoacyl-tRNA synthetase family. As to quaternary structure, monomer.

It localises to the cytoplasm. The catalysed reaction is tRNA(Arg) + L-arginine + ATP = L-arginyl-tRNA(Arg) + AMP + diphosphate. The sequence is that of Arginine--tRNA ligase from Oenococcus oeni (strain ATCC BAA-331 / PSU-1).